Consider the following 260-residue polypeptide: 6-carboxyhexanoate--CoA ligase (260 aa).

The protein belongs to the BioW family. In terms of assembly, homodimer. Mg(2+) serves as cofactor.

It catalyses the reaction heptanedioate + ATP + CoA = 6-carboxyhexanoyl-CoA + AMP + diphosphate. It functions in the pathway metabolic intermediate metabolism; pimeloyl-CoA biosynthesis; pimeloyl-CoA from pimelate: step 1/1. Catalyzes the transformation of pimelate into pimeloyl-CoA with concomitant hydrolysis of ATP to AMP. This chain is 6-carboxyhexanoate--CoA ligase, found in Fibrobacter succinogenes (strain ATCC 19169 / S85).